Here is a 222-residue protein sequence, read N- to C-terminus: Ribonuclease 3 (222 aa).

The RNase III domain occupies 3–125; that stretch reads SQSVAKKLNH…LFGAIYLDAG (123 aa). Position 38 (E38) interacts with Mg(2+). Residue D42 is part of the active site. The Mg(2+) site is built by D111 and E114. The active site involves E114. Residues 152 to 222 form the DRBM domain; it reads DAKTRLQEWL…AEKALKELLA (71 aa).

Belongs to the ribonuclease III family. Homodimer. The cofactor is Mg(2+).

It is found in the cytoplasm. It carries out the reaction Endonucleolytic cleavage to 5'-phosphomonoester.. Its function is as follows. Digests double-stranded RNA. Involved in the processing of primary rRNA transcript to yield the immediate precursors to the large and small rRNAs (23S and 16S). Processes some mRNAs, and tRNAs when they are encoded in the rRNA operon. Processes pre-crRNA and tracrRNA of type II CRISPR loci if present in the organism. The sequence is that of Ribonuclease 3 from Dechloromonas aromatica (strain RCB).